The chain runs to 597 residues: Fructan 1-exohydrolase w1 (597 aa).

The first 20 residues, 1–20, serve as a signal peptide directing secretion; it reads MAQAWAFLLPVLVFGSYVTS. The active site involves Asp76. N-linked (GlcNAc...) asparagine glycosylation is found at Asn169, Asn237, and Asn249. The cysteines at positions 447 and 493 are disulfide-linked. An N-linked (GlcNAc...) asparagine glycan is attached at Asn568.

The protein belongs to the glycosyl hydrolase 32 family.

The enzyme catalyses Hydrolysis of terminal, non-reducing (2-&gt;1)-linked beta-D-fructofuranose residues in fructans.. With respect to regulation, inhibited by sucrose. Hydrolyzes inulin-type beta-(2,1)-fructans and beta-(2,1)-linkages in branched fructans. Has low activity against beta-(2,6)-linked fructans. May play a role as a beta-(2,1)-trimmer during graminan biosynthesis. This Triticum aestivum (Wheat) protein is Fructan 1-exohydrolase w1.